The primary structure comprises 430 residues: Adenylosuccinate synthetase (430 aa).

GTP is bound by residues G13–K19 and G41–T43. D14 serves as the catalytic Proton acceptor. 2 residues coordinate Mg(2+): D14 and G41. Residues D14 to K17, N39 to H42, T130, R144, Q225, T240, and R304 contribute to the IMP site. The Proton donor role is filled by H42. A substrate-binding site is contributed by A300–R306. GTP-binding positions include R306, K332 to D334, and S414 to G416.

This sequence belongs to the adenylosuccinate synthetase family. Homodimer. Requires Mg(2+) as cofactor.

It is found in the cytoplasm. The enzyme catalyses IMP + L-aspartate + GTP = N(6)-(1,2-dicarboxyethyl)-AMP + GDP + phosphate + 2 H(+). Its pathway is purine metabolism; AMP biosynthesis via de novo pathway; AMP from IMP: step 1/2. In terms of biological role, plays an important role in the de novo pathway of purine nucleotide biosynthesis. Catalyzes the first committed step in the biosynthesis of AMP from IMP. This is Adenylosuccinate synthetase from Pseudomonas syringae pv. syringae (strain B728a).